A 139-amino-acid chain; its full sequence is Large ribosomal subunit protein uL16 (139 aa).

The span at 1–20 shows a compositional bias: basic residues; that stretch reads MLMPRRVKHRKQHHPTRRGA. A disordered region spans residues 1–24; sequence MLMPRRVKHRKQHHPTRRGAAKGG.

The protein belongs to the universal ribosomal protein uL16 family. Part of the 50S ribosomal subunit.

Its function is as follows. Binds 23S rRNA and is also seen to make contacts with the A and possibly P site tRNAs. The polypeptide is Large ribosomal subunit protein uL16 (Nocardioides sp. (strain ATCC BAA-499 / JS614)).